The chain runs to 87 residues: Pyocin-S2 immunity protein (87 aa).

This sequence belongs to the colicins ColE2/ColE8/ColE9 and pyocins S1/S2 family.

This chain is Pyocin-S2 immunity protein (imm2), found in Pseudomonas aeruginosa (strain ATCC 15692 / DSM 22644 / CIP 104116 / JCM 14847 / LMG 12228 / 1C / PRS 101 / PAO1).